The sequence spans 1070 residues: 3',5'-cyclic-AMP phosphodiesterase (1070 aa).

Disordered stretches follow at residues 1 to 91 (MSQE…KQDS), 166 to 215 (STSI…TRFQ), 487 to 516 (VPAS…LSQG), and 615 to 653 (SAGQ…RLPT). The span at 51–69 (KQVQVQSQKFSSTSSTTKV) shows a compositional bias: low complexity. Residues 70–84 (ATHSFSMSSSAGTTG) are compositionally biased toward polar residues. Low complexity predominate over residues 166 to 210 (STSIITSSEQRTSTSTSSSSSTRYIASGSSNLAGGNSNSASSASS). The segment covering 488–506 (PASNKSRRPNQSSSASRSG) has biased composition (polar residues). The PDEase domain maps to 656–985 (VETPRENELG…DYYQSMIPPS (330 aa)). H732 serves as the catalytic Proton donor. 732-736 (HNSLH) contributes to the 3',5'-cyclic AMP binding site. A divalent metal cation-binding residues include H736, H772, D773, and D890. 3',5'-cyclic AMP is bound by residues D773, D890, and Q941. The segment covering 1007–1024 (EESDQENLAELEEGDESG) has biased composition (acidic residues). The disordered stretch occupies residues 1007–1070 (EESDQENLAE…CQNQPQHGGM (64 aa)). Residues 1025–1042 (GESTTTGTTGTTAASALS) show a composition bias toward low complexity. A compositionally biased stretch (gly residues) spans 1043-1054 (GAGGGGGGGGGM). The segment covering 1060–1070 (GCQNQPQHGGM) has biased composition (polar residues).

It belongs to the cyclic nucleotide phosphodiesterase family. PDE4 subfamily. In terms of assembly, monomer. A divalent metal cation serves as cofactor.

It carries out the reaction 3',5'-cyclic AMP + H2O = AMP + H(+). It participates in purine metabolism; 3',5'-cyclic AMP degradation; AMP from 3',5'-cyclic AMP: step 1/1. Functionally, hydrolyzes the second messenger cAMP, which is a key regulator of many important physiological processes. Vital for female fertility. Required for learning/memory. The protein is 3',5'-cyclic-AMP phosphodiesterase (dnc) of Drosophila melanogaster (Fruit fly).